A 420-amino-acid chain; its full sequence is Pyrin and HIN domain-containing protein 1 (420 aa).

The Pyrin domain occupies 1 to 87; sequence MVNEYKRIVL…ANKLKNEKAK (87 aa). Disordered stretches follow at residues 82-201 and 216-236; these read KNEK…SSSA and RLKN…GSKK. Residues 87–102 show a composition bias toward basic residues; the sequence is KAKRTRTGKRKTAAKR. Polar residues-rich tracts occupy residues 108–118 and 126–151; these read PSTSQPMSTTN and GRST…AIQI. Over residues 152–169 the composition is skewed to low complexity; that stretch reads SPTIASSSGQTSSRSSET. Polar residues predominate over residues 170–201; it reads LQSIIQSPKTPKRPSSSILDPPVSSGTASSSA. One can recognise an HIN-200 domain in the interval 219 to 416; the sequence is NVPKEPSEEN…STTHSNMQVI (198 aa). Over residues 220–229 the composition is skewed to basic and acidic residues; it reads VPKEPSEENG.

This sequence belongs to the HIN-200 family.

It is found in the nucleus. The sequence is that of Pyrin and HIN domain-containing protein 1 from Mus musculus (Mouse).